A 269-amino-acid polypeptide reads, in one-letter code: Tryptophan synthase alpha chain (269 aa).

Residues Glu41 and Asp52 each act as proton acceptor in the active site.

It belongs to the TrpA family. In terms of assembly, tetramer of two alpha and two beta chains.

The enzyme catalyses (1S,2R)-1-C-(indol-3-yl)glycerol 3-phosphate + L-serine = D-glyceraldehyde 3-phosphate + L-tryptophan + H2O. It functions in the pathway amino-acid biosynthesis; L-tryptophan biosynthesis; L-tryptophan from chorismate: step 5/5. In terms of biological role, the alpha subunit is responsible for the aldol cleavage of indoleglycerol phosphate to indole and glyceraldehyde 3-phosphate. This chain is Tryptophan synthase alpha chain, found in Geobacillus stearothermophilus (Bacillus stearothermophilus).